Here is a 639-residue protein sequence, read N- to C-terminus: Chaperone protein DnaK (639 aa).

The residue at position 198 (T198) is a Phosphothreonine; by autocatalysis. The span at 603–618 shows a compositional bias: low complexity; the sequence is AKAQTQGGAQEGAAKQ. The interval 603–639 is disordered; sequence AKAQTQGGAQEGAAKQSNATADDVVDAEFEEVKDDKK. Residues 625–639 are compositionally biased toward acidic residues; sequence DVVDAEFEEVKDDKK.

This sequence belongs to the heat shock protein 70 family.

Acts as a chaperone. This Shewanella sp. (strain MR-7) protein is Chaperone protein DnaK.